A 671-amino-acid chain; its full sequence is UvrABC system protein B (671 aa).

The region spanning 31–414 is the Helicase ATP-binding domain; the sequence is DGFEQGEKAQ…ELNQTDHKVE (384 aa). 44-51 is a binding site for ATP; it reads GATGTGKT. A Beta-hairpin motif is present at residues 97 to 120; the sequence is YYDYYQPEAYVPQSDTYIEKDSSI. Residues 435 to 601 enclose the Helicase C-terminal domain; that stretch reads QIDDLVGEVN…TIVKPIRDVI (167 aa). The UVR domain maps to 630-665; it reads QNMIKTLTAQMQEAAKKLDFEEAANLRDAIMDLKKQ.

It belongs to the UvrB family. Forms a heterotetramer with UvrA during the search for lesions. Interacts with UvrC in an incision complex.

The protein localises to the cytoplasm. The UvrABC repair system catalyzes the recognition and processing of DNA lesions. A damage recognition complex composed of 2 UvrA and 2 UvrB subunits scans DNA for abnormalities. Upon binding of the UvrA(2)B(2) complex to a putative damaged site, the DNA wraps around one UvrB monomer. DNA wrap is dependent on ATP binding by UvrB and probably causes local melting of the DNA helix, facilitating insertion of UvrB beta-hairpin between the DNA strands. Then UvrB probes one DNA strand for the presence of a lesion. If a lesion is found the UvrA subunits dissociate and the UvrB-DNA preincision complex is formed. This complex is subsequently bound by UvrC and the second UvrB is released. If no lesion is found, the DNA wraps around the other UvrB subunit that will check the other stand for damage. The polypeptide is UvrABC system protein B (Lactobacillus johnsonii (strain CNCM I-12250 / La1 / NCC 533)).